An 842-amino-acid polypeptide reads, in one-letter code: ATP-binding cassette sub-family B member 6 (842 aa).

At 1–26 the chain is on the lumenal side; it reads MVTVGNYCEAEGPLGPAWAQNGLSPC. The tract at residues 1–205 is required for the lysosomal targeting; that stretch reads MVTVGNYCEA…SGGLFILGLW (205 aa). The tract at residues 1 to 236 is required for ATPase activity; sequence MVTVGNYCEA…RNQAQSTDRT (236 aa). Cysteines 8 and 26 form a disulfide. Residues 27-47 form a helical membrane-spanning segment; it reads FFFTLVPSTLMALGALALVLV. Residues 48-72 lie on the Cytoplasmic side of the membrane; the sequence is LPCRRRDVPSGTEELFWAADSRVAP. Residues 73–93 form a helical membrane-spanning segment; that stretch reads YALQLFLATLQVALPLAGLAG. Residues 94-106 are Lumenal-facing; it reads RVGTARGVRLPGY. A helical membrane pass occupies residues 107 to 127; it reads LLLASMLGSLASACGLWLLVA. Residues 128-147 lie on the Cytoplasmic side of the membrane; that stretch reads ERRQARQSLAMGVWMKFRHS. The chain crosses the membrane as a helical span at residues 148 to 168; that stretch reads SGLLLLWTVAFAAENLALVSW. The Lumenal segment spans residues 169-185; that stretch reads NSPQWWWARADLGQQVQ. A helical transmembrane segment spans residues 186-206; that stretch reads FGLWVLRYVISGGLFILGLWA. The Cytoplasmic segment spans residues 207 to 263; that stretch reads PGLRPQSYTLRVHEADQDVERNQAQSTDRTSTWRDLGRKLRLLSSYLWPRGSPALQF. The chain crosses the membrane as a helical span at residues 264-284; the sequence is IVLICLGLMGLDRALNVLVPI. An ABC transmembrane type-1 domain is found at 265–556; that stretch reads VLICLGLMGL…FGTYYRMIQT (292 aa). Residues 285–305 are Lumenal-facing; sequence FYRDIVNLLTSKAPWSSLAWT. A helical membrane pass occupies residues 306 to 326; it reads VTTYVFLKFLQGGGTGSTGFV. The Cytoplasmic segment spans residues 327-375; that stretch reads SNLRTFLWIRVQQFTSRGVELRLFSHLHELSLRWHLGRRTGEVLRVVDR. A helical transmembrane segment spans residues 376-396; the sequence is GTSSVTGLLSYLVFNIIPTLA. D397 is a topological domain (lumenal). Residues 398 to 418 traverse the membrane as a helical segment; sequence IIIGIIYFSMFFNAWFGLIVF. Topologically, residues 419–499 are cytoplasmic; it reads LCMSLYLFLT…SSASLVVLNQ (81 aa). The chain crosses the membrane as a helical span at residues 500-520; the sequence is TQNLVIGLGLLAGSLLCAYFV. Residues 521–529 are Lumenal-facing; the sequence is SEQKLQVGD. The helical transmembrane segment at 530–550 threads the bilayer; sequence FVLFGTYITQLYMPLNWFGTY. Over 551–842 the chain is Cytoplasmic; sequence YRMIQTNFID…SEDSKPQDIA (292 aa). The ABC transporter domain maps to 590–824; that stretch reads IEFENVHFSY…GGVYAEMWQL (235 aa). 623–630 contributes to the ATP binding site; the sequence is GPSGAGKS.

Belongs to the ABC transporter superfamily. ABCB family. Heavy Metal importer (TC 3.A.1.210) subfamily. In terms of assembly, homodimer. Post-translationally, N-glycosylated. As to expression, highly expressed in the liver, adrenal glands, and testis.

Its subcellular location is the cell membrane. It is found in the mitochondrion outer membrane. The protein localises to the endoplasmic reticulum membrane. The protein resides in the golgi apparatus membrane. It localises to the endosome membrane. Its subcellular location is the lysosome membrane. It is found in the late endosome membrane. The protein localises to the early endosome membrane. The protein resides in the secreted. It localises to the extracellular exosome. Its subcellular location is the mitochondrion. It is found in the endosome. The protein localises to the multivesicular body membrane. The protein resides in the melanosome membrane. It carries out the reaction heme b(in) + ATP + H2O = heme b(out) + ADP + phosphate + H(+). The enzyme catalyses coproporphyrin III(in) + ATP + H2O = coproporphyrin III(out) + ADP + phosphate + H(+). The catalysed reaction is pheophorbide a(in) + ATP + H2O = pheophorbide a(out) + ADP + phosphate + H(+). It catalyses the reaction coproporphyrinogen III(in) + ATP + H2O = coproporphyrinogen III(out) + ADP + phosphate + H(+). It carries out the reaction protoporphyrin IX(in) + ATP + H2O = protoporphyrin IX(out) + ADP + phosphate + H(+). The enzyme catalyses coproporphyrin I(in) + ATP + H2O = coproporphyrin I(out) + ADP + phosphate + H(+). The catalysed reaction is uroporphyrin I(in) + ATP + H2O = uroporphyrin I(out) + ADP + phosphate + H(+). It catalyses the reaction uroporphyrin III(in) + ATP + H2O = uroporphyrin III(out) + ADP + phosphate + H(+). ATP-dependent transporter that catalyzes the transport of a broad-spectrum of porphyrins from the cytoplasm to the extracellular space through the plasma membrane or into the vesicle lumen. May also function as an ATP-dependent importer of porphyrins from the cytoplasm into the mitochondria, in turn may participate in the de novo heme biosynthesis regulation and in the coordination of heme and iron homeostasis during phenylhydrazine stress. May also play a key role in the early steps of melanogenesis producing PMEL amyloid fibrils. In vitro, it confers to cells a resistance to toxic metal such as arsenic and cadmium and against chemotherapeutics agent such as 5-fluorouracil, SN-38 and vincristin. In addition may play a role in the transition metal homeostasis. This Mesocricetus auratus (Golden hamster) protein is ATP-binding cassette sub-family B member 6.